Consider the following 141-residue polypeptide: Hemoglobin subunit alpha (141 aa).

The region spanning 1-141 is the Globin domain; sequence VLSSADKANI…VSTVLTSKYR (141 aa). Phosphoserine is present on serine 3. An N6-succinyllysine mark is found at lysine 7 and lysine 11. At lysine 16 the chain carries N6-acetyllysine; alternate. Lysine 16 bears the N6-succinyllysine; alternate mark. A Phosphotyrosine modification is found at tyrosine 24. Lysine 40 is subject to N6-succinyllysine. Serine 49 carries the phosphoserine modification. Histidine 58 is a binding site for O2. Histidine 87 is a binding site for heme b. Serine 102 carries the post-translational modification Phosphoserine. Residue threonine 108 is modified to Phosphothreonine. A Phosphoserine modification is found at serine 131. Residues threonine 134 and threonine 137 each carry the phosphothreonine modification. Residue serine 138 is modified to Phosphoserine.

It belongs to the globin family. In terms of assembly, heterotetramer of two alpha chains and two beta chains. As to expression, red blood cells.

Its function is as follows. Involved in oxygen transport from the lung to the various peripheral tissues. In terms of biological role, hemopressin acts as an antagonist peptide of the cannabinoid receptor CNR1. Hemopressin-binding efficiently blocks cannabinoid receptor CNR1 and subsequent signaling. This is Hemoglobin subunit alpha (HBA) from Crocuta crocuta (Spotted hyena).